Consider the following 904-residue polypeptide: Envelope glycoprotein (904 aa).

Topologically, residues 1 to 726 (MDQDLDGAER…LFDWTSWKDW (726 aa)) are extracellular. Residues Asn131, Asn255, Asn277, Asn296, Asn329, Asn367, Asn376, Asn385, Asn410, Asn427, Asn432, Asn452, Asn491, Asn509, and Asn541 are each glycosylated (N-linked (GlcNAc...) asparagine; by host). The tract at residues 556–576 (AVGLAIFLLVLAIMAITSSLV) is fusion peptide. Positions 588 to 638 (AKVVERVVQNVSYIAQTQDQFTHLFRNINNRLNVLHHRVSYLEYVEEIRQK) form a coiled coil. Asn597 is a glycosylation site (N-linked (GlcNAc...) asparagine; by host). The segment at 615-631 (INNRLNVLHHRVSYLEY) is immunosuppression. N-linked (GlcNAc...) asparagine; by host glycosylation is found at Asn663 and Asn694. Residues 676-712 (DEYDKIEEKILKIRVDWLNSSLSDTQDTFGLETSIFD) adopt a coiled-coil conformation. Residues 727–747 (IKIIIVIIVLWLLIKILLGML) form a helical membrane-spanning segment. Topologically, residues 748 to 904 (RSCAKVSQNY…AWYEGLRGSQ (157 aa)) are cytoplasmic. Disordered stretches follow at residues 761–783 (PAEEEDGDTEPESSPARGDPASG) and 862–904 (GGTS…RGSQ). Over residues 878-887 (WTGSREQNNP) the composition is skewed to polar residues.

In terms of assembly, the mature envelope protein (Env) consists of a trimer of SU-TM heterodimers attached by non-covalent interactions or by a labile interchain disulfide bond. Post-translationally, specific enzymatic cleavages in vivo yield mature proteins. Envelope glycoproteins are synthesized as an inactive precursor that is N-glycosylated and processed likely by host cell furin or by a furin-like protease in the Golgi to yield the mature SU and TM proteins. The cleavage site between SU and TM requires the minimal sequence [KR]-X-[KR]-R.

It is found in the virion membrane. Its subcellular location is the host cell membrane. Its function is as follows. The surface protein (SU) attaches the virus to the host cell by binding to its receptor. This interaction triggers the refolding of the transmembrane protein (TM) and is thought to activate its fusogenic potential by unmasking its fusion peptide. Fusion occurs at the host cell plasma membrane. The transmembrane protein (TM) acts as a class I viral fusion protein. Under the current model, the protein has at least 3 conformational states: pre-fusion native state, pre-hairpin intermediate state, and post-fusion hairpin state. During viral and target cell membrane fusion, the coiled coil regions (heptad repeats) assume a trimer-of-hairpins structure, positioning the fusion peptide in close proximity to the C-terminal region of the ectodomain. The formation of this structure appears to drive apposition and subsequent fusion of viral and target cell membranes. Membranes fusion leads to delivery of the nucleocapsid into the cytoplasm. This Bovine immunodeficiency virus (strain R29) (BIV) protein is Envelope glycoprotein (env).